Here is a 255-residue protein sequence, read N- to C-terminus: DFWVGPFYVGFFGVTAAFFIMLGTALIIWGAALGPTWNIWQISIAPPDLSYGLGLAPLAKGGLWQIITVCAIGAFGSWALREVEISRKLGIGLHVPAAFSVAIFAYVTLEVIRPLLMGAWGNGFPYGIMSHLDWVSNTGYAYLNFEYNPMHMVAVTLFFTTTLALALHGSLVLAAINPPAGETVKFAEHEDTFFRDFIGYSIGTLGIHRLGLFLALGAGFASATCILLSGPFWTQGWPSWWGWWLHLPIWQFGGH.

3 helical membrane-spanning segments follow: residues 11-33 (FFGVTAAFFIMLGTALIIWGAAL), 61-89 (GGLWQIITVCAIGAFGSWALREVEISRKL), and 94-116 (HVPAAFSVAIFAYVTLEVIRPLL). (7R,8Z)-bacteriochlorophyll b is bound by residues His131 and His151. A helical membrane pass occupies residues 149-176 (PMHMVAVTLFFTTTLALALHGSLVLAAI). His168 contacts Fe cation. A ubiquinone is bound at residue Phe194. The chain crosses the membrane as a helical span at residues 203-228 (GTLGIHRLGLFLALGAGFASATCILL). A Fe cation-binding site is contributed by His208.

It belongs to the reaction center PufL/M/PsbA/D family. In terms of assembly, reaction center is composed of four bacteriochlorophylls, two bacteriopheophytins, two ubiquinones, one iron, and two highly hydrophobic polypeptide chains (designated L and M).

The protein localises to the cell inner membrane. The reaction center is a membrane-bound complex that mediates the initial photochemical event in the electron transfer process of photosynthesis. The sequence is that of Reaction center protein L chain (pufL) from Acidiphilium multivorum.